Consider the following 710-residue polypeptide: ATP-dependent RNA helicase DBP7 (710 aa).

Residues 1 to 97 (MSDNDGLMLM…KDVPPQPANA (97 aa)) form a disordered region. Polar residues predominate over residues 11–21 (NFTTESGPDNA). Positions 54 to 68 (PAAAVEEAPAAAVPE) are enriched in low complexity. Residues 134–163 (DTFEALGVRGTLLEHLTGKMKIQKPTKIQK) carry the Q motif motif. The Helicase ATP-binding domain maps to 167-361 (PEVLNGKADL…DIALTDPKVI (195 aa)). 180-187 (AQTGSGKT) contacts ATP. The DEAD box signature appears at 296 to 299 (DEGD). The Helicase C-terminal domain maps to 396-588 (AISELSRKAP…LLAPAFAAPV (193 aa)). Residues 669–690 (PKGMAAHRGKPATPKPKQDDAR) are disordered.

Belongs to the DEAD box helicase family. DDX31/DBP7 subfamily.

Its subcellular location is the nucleus. It localises to the nucleolus. The catalysed reaction is ATP + H2O = ADP + phosphate + H(+). Its function is as follows. ATP-binding RNA helicase involved in the biogenesis of 60S ribosomal subunits and is required for the normal formation of 25S and 5.8S rRNAs. This Eremothecium gossypii (strain ATCC 10895 / CBS 109.51 / FGSC 9923 / NRRL Y-1056) (Yeast) protein is ATP-dependent RNA helicase DBP7 (DBP7).